The following is a 368-amino-acid chain: Histidinol-phosphate aminotransferase (368 aa).

K223 carries the post-translational modification N6-(pyridoxal phosphate)lysine.

It belongs to the class-II pyridoxal-phosphate-dependent aminotransferase family. Histidinol-phosphate aminotransferase subfamily. As to quaternary structure, homodimer. It depends on pyridoxal 5'-phosphate as a cofactor.

It carries out the reaction L-histidinol phosphate + 2-oxoglutarate = 3-(imidazol-4-yl)-2-oxopropyl phosphate + L-glutamate. It participates in amino-acid biosynthesis; L-histidine biosynthesis; L-histidine from 5-phospho-alpha-D-ribose 1-diphosphate: step 7/9. This Sinorhizobium fredii (strain NBRC 101917 / NGR234) protein is Histidinol-phosphate aminotransferase (hisC).